Reading from the N-terminus, the 225-residue chain is MNSPIEKLTRQLGYQFQDDELLNLALTHRSANSKHNERLEFLGDSILSFVIADELYHRFPKVNEGDMSRMRATLVRGNTLAELGREFGLGDYLKLGPGELKSGGFRRDSILADAVEAIIGAVYLDSDLEVVRGIVLNWYTSRLEAIKPGVSQKDPKTRLQEFLQGRRKPLPVYTVTNIKGEAHNQEFTVECDIAGMDKPVVGRGTSRRKAEQAAAELALEQLTNG.

In terms of domain architecture, RNase III spans 5–127 (IEKLTRQLGY…IIGAVYLDSD (123 aa)). E40 is a binding site for Mg(2+). D44 is an active-site residue. The Mg(2+) site is built by D113 and E116. E116 is a catalytic residue. Residues 154–224 (DPKTRLQEFL…AELALEQLTN (71 aa)) form the DRBM domain.

This sequence belongs to the ribonuclease III family. In terms of assembly, homodimer. Mg(2+) serves as cofactor.

It is found in the cytoplasm. It carries out the reaction Endonucleolytic cleavage to 5'-phosphomonoester.. Functionally, digests double-stranded RNA. Involved in the processing of primary rRNA transcript to yield the immediate precursors to the large and small rRNAs (23S and 16S). Processes some mRNAs, and tRNAs when they are encoded in the rRNA operon. Processes pre-crRNA and tracrRNA of type II CRISPR loci if present in the organism. The polypeptide is Ribonuclease 3 (Vibrio vulnificus (strain CMCP6)).